The primary structure comprises 513 residues: Light-independent protochlorophyllide reductase subunit B (513 aa).

Residue Asp-36 participates in [4Fe-4S] cluster binding. Catalysis depends on Asp-299, which acts as the Proton donor. 434-435 (GM) lines the substrate pocket.

Belongs to the ChlB/BchB/BchZ family. As to quaternary structure, protochlorophyllide reductase is composed of three subunits; ChlL, ChlN and ChlB. Forms a heterotetramer of two ChlB and two ChlN subunits. [4Fe-4S] cluster serves as cofactor.

The protein localises to the plastid. Its subcellular location is the chloroplast. The catalysed reaction is chlorophyllide a + oxidized 2[4Fe-4S]-[ferredoxin] + 2 ADP + 2 phosphate = protochlorophyllide a + reduced 2[4Fe-4S]-[ferredoxin] + 2 ATP + 2 H2O. The protein operates within porphyrin-containing compound metabolism; chlorophyll biosynthesis (light-independent). Its function is as follows. Component of the dark-operative protochlorophyllide reductase (DPOR) that uses Mg-ATP and reduced ferredoxin to reduce ring D of protochlorophyllide (Pchlide) to form chlorophyllide a (Chlide). This reaction is light-independent. The NB-protein (ChlN-ChlB) is the catalytic component of the complex. The protein is Light-independent protochlorophyllide reductase subunit B of Chaetosphaeridium globosum (Charophycean green alga).